Consider the following 262-residue polypeptide: Acyl-[acyl-carrier-protein]--UDP-N-acetylglucosamine O-acyltransferase (262 aa).

It belongs to the transferase hexapeptide repeat family. LpxA subfamily. As to quaternary structure, homotrimer.

It is found in the cytoplasm. The enzyme catalyses a (3R)-hydroxyacyl-[ACP] + UDP-N-acetyl-alpha-D-glucosamine = a UDP-3-O-[(3R)-3-hydroxyacyl]-N-acetyl-alpha-D-glucosamine + holo-[ACP]. It functions in the pathway glycolipid biosynthesis; lipid IV(A) biosynthesis; lipid IV(A) from (3R)-3-hydroxytetradecanoyl-[acyl-carrier-protein] and UDP-N-acetyl-alpha-D-glucosamine: step 1/6. Functionally, involved in the biosynthesis of lipid A, a phosphorylated glycolipid that anchors the lipopolysaccharide to the outer membrane of the cell. This chain is Acyl-[acyl-carrier-protein]--UDP-N-acetylglucosamine O-acyltransferase, found in Erwinia tasmaniensis (strain DSM 17950 / CFBP 7177 / CIP 109463 / NCPPB 4357 / Et1/99).